Here is a 329-residue protein sequence, read N- to C-terminus: GTP 3',8-cyclase (329 aa).

The Radical SAM core domain occupies 8–234 (AFARKYYYLR…QLRQRSDGPA (227 aa)). Arg17 is a binding site for GTP. Cys24 and Cys28 together coordinate [4Fe-4S] cluster. Residue Tyr30 participates in S-adenosyl-L-methionine binding. Cys31 lines the [4Fe-4S] cluster pocket. Arg68 contributes to the GTP binding site. Gly72 is a binding site for S-adenosyl-L-methionine. Thr99 contacts GTP. Residue Ser123 participates in S-adenosyl-L-methionine binding. Residue Lys160 coordinates GTP. Met194 contacts S-adenosyl-L-methionine. Residues Cys257 and Cys260 each coordinate [4Fe-4S] cluster. A GTP-binding site is contributed by 262 to 264 (RLR). Cys274 contributes to the [4Fe-4S] cluster binding site.

Belongs to the radical SAM superfamily. MoaA family. In terms of assembly, monomer and homodimer. The cofactor is [4Fe-4S] cluster.

The enzyme catalyses GTP + AH2 + S-adenosyl-L-methionine = (8S)-3',8-cyclo-7,8-dihydroguanosine 5'-triphosphate + 5'-deoxyadenosine + L-methionine + A + H(+). It functions in the pathway cofactor biosynthesis; molybdopterin biosynthesis. Its function is as follows. Catalyzes the cyclization of GTP to (8S)-3',8-cyclo-7,8-dihydroguanosine 5'-triphosphate. The sequence is that of GTP 3',8-cyclase from Escherichia coli O17:K52:H18 (strain UMN026 / ExPEC).